The primary structure comprises 198 residues: Thymidylate kinase (198 aa).

G10–T17 lines the ATP pocket.

The protein belongs to the thymidylate kinase family.

It carries out the reaction dTMP + ATP = dTDP + ADP. In terms of biological role, phosphorylation of dTMP to form dTDP in both de novo and salvage pathways of dTTP synthesis. In Thermus thermophilus (strain ATCC BAA-163 / DSM 7039 / HB27), this protein is Thymidylate kinase.